The sequence spans 314 residues: Ribonuclease Z (314 aa).

7 residues coordinate Zn(2+): His62, His64, Asp66, His67, His144, Asp215, and His273. Asp66 acts as the Proton acceptor in catalysis.

This sequence belongs to the RNase Z family. As to quaternary structure, homodimer. It depends on Zn(2+) as a cofactor.

It carries out the reaction Endonucleolytic cleavage of RNA, removing extra 3' nucleotides from tRNA precursor, generating 3' termini of tRNAs. A 3'-hydroxy group is left at the tRNA terminus and a 5'-phosphoryl group is left at the trailer molecule.. Its function is as follows. Zinc phosphodiesterase, which displays some tRNA 3'-processing endonuclease activity. Probably involved in tRNA maturation, by removing a 3'-trailer from precursor tRNA. The polypeptide is Ribonuclease Z (Prochlorococcus marinus (strain NATL2A)).